Consider the following 407-residue polypeptide: MRWVRALLKNASLAGAPKYIEHFSKFSPSPLSMKQFLDFGSSNACEKTSFTFLRQELPVRLANIMKEINLLPDRVLGTPSVQLVQSWYVQSLLDIMEFLDKDPEDHRTLSQFTDALVTIRNRHNDVVPTMAQGVLEYKDTYGDDPVSNQNIQYFLDRFYLSRISIRMLINQHTLIFDGSTNPAHPKHIGSIDPNCSVSDVVKDAYDMAKLLCDKYYMASPDLEIQEVNATNANQPIHMVYVPSHLYHMLFELFKNAMRATVESHESSLTLPPIKIMVALGEEDLSIKMSDRGGGVPLRKIERLFSYMYSTAPTPQPGTGGTPLAGFGYGLPISRLYAKYFQGDLQLFSMEGFGTDAVIYLKALSTDSVERLPVYNKSAWRHYQTIQEAGDWCVPSTEPKNTSTYRVS.

The Histidine kinase domain maps to Leu135 to Ser364. Phosphotyrosine is present on residues Tyr215 and Tyr216. ATP is bound by residues Glu251 to Arg258, Asp290, Ser309 to Thr310, and Gly325 to Leu330. Lys376 is modified (N6-succinyllysine).

Belongs to the PDK/BCKDK protein kinase family. In terms of assembly, homodimer, and heterodimer with PDK1. Interacts with the pyruvate dehydrogenase complex subunit DLAT, and is part of the multimeric pyruvate dehydrogenase complex that contains multiple copies of pyruvate dehydrogenase (E1), dihydrolipoamide acetyltransferase (DLAT, E2) and lipoamide dehydrogenase (DLD, E3). As to expression, detected in heart (at protein level).

The protein localises to the mitochondrion matrix. The enzyme catalyses L-seryl-[pyruvate dehydrogenase E1 alpha subunit] + ATP = O-phospho-L-seryl-[pyruvate dehydrogenase E1 alpha subunit] + ADP + H(+). In terms of biological role, kinase that plays a key role in the regulation of glucose and fatty acid metabolism and homeostasis via phosphorylation of the pyruvate dehydrogenase subunits PDHA1 and PDHA2. This inhibits pyruvate dehydrogenase activity, and thereby regulates metabolite flux through the tricarboxylic acid cycle, down-regulates aerobic respiration and inhibits the formation of acetyl-coenzyme A from pyruvate. Inhibition of pyruvate dehydrogenase decreases glucose utilization and increases fat metabolism. Mediates cellular responses to insulin. Plays an important role in maintaining normal blood glucose levels and in metabolic adaptation to nutrient availability. Via its regulation of pyruvate dehydrogenase activity, plays an important role in maintaining normal blood pH and in preventing the accumulation of ketone bodies under starvation. Plays a role in the regulation of cell proliferation and in resistance to apoptosis under oxidative stress. Plays a role in p53/TP53-mediated apoptosis. This chain is [Pyruvate dehydrogenase (acetyl-transferring)] kinase isozyme 2, mitochondrial (Pdk2), found in Mus musculus (Mouse).